Here is a 327-residue protein sequence, read N- to C-terminus: Gamma-resorcylate decarboxylase (327 aa).

Glu8, His10, His164, and Asp287 together coordinate Zn(2+). Residue Asp287 is part of the active site.

This sequence belongs to the metallo-dependent hydrolases superfamily. ACMSD family. Homotetramer. The cofactor is Zn(2+).

The enzyme catalyses 2,6-dihydroxybenzoate + H(+) = resorcinol + CO2. The catalysed reaction is 2,3-dihydroxybenzoate + H(+) = catechol + CO2. It participates in aromatic compound metabolism. With respect to regulation, insensitive to oxygen. Decarboxylation and carboxylation are inhibited by AgNO(3) and by diethyl pyrocarbonate, a histidine residue-specific inhibitor. Decarboxylation is also inhibited by HgCl(2) and activated by MgCl(2). Involved in the gamma-resorcylate (2,6-dihydroxybenzoate) catabolism. Catalyzes the reversible decarboxylation of gamma-resorcylate to resorcinol. Also catalyzes the decarboxylation of 2,3-dihydroxybenzoate to catechol, but does not act on 2-hydroxybenzoic acid 3-hydroxybenzoic acid, 4-hydroxybenzoic acid, 3,4-dihydroxybenzoic acid, 2,5-dihydroxybenzoic acid, 2,3,4-trihydroxybenzoic acid, 3,4,5-trihydroxybenzoic acid, 4-aminobenzoic acid, o-hydroxyphenylacetic acid and vanillic acid. Resorcinol and catechol can both be carboxylated by the reverse reaction. This is Gamma-resorcylate decarboxylase from Rhizobium radiobacter (Agrobacterium tumefaciens).